We begin with the raw amino-acid sequence, 905 residues long: Microtubule-associated protein 10 (905 aa).

Disordered regions lie at residues 30–51, 199–235, 329–362, 434–458, 547–586, 721–772, and 786–855; these read AAAV…SSPR, TRTG…KPLG, APEE…AHEH, SPES…GGCE, SSAE…FDEP, RSFK…GSPV, and KSLE…SSYL. Acidic residues predominate over residues 34–43; that stretch reads EQEEEEEEKE. Residues 208–227 are compositionally biased toward low complexity; the sequence is SPQTQQERQQLQQPASQPSP. Residues 443 to 453 show a composition bias toward basic and acidic residues; it reads CRSEAKKDKRS. Positions 567–579 are enriched in polar residues; the sequence is ASFTENSDTSRQI. Residues 721 to 736 show a composition bias toward basic and acidic residues; it reads RSFKAHDSSSRTENPK. Over residues 737–748 the composition is skewed to polar residues; it reads HSQYTSKSSDTG. Residues 790–801 are compositionally biased toward low complexity; that stretch reads EASSISASDLSS. Over residues 830–855 the composition is skewed to polar residues; it reads SVKTRSSWKSLEKSQSPQTSQVSSYL.

As to quaternary structure, interacts (via middle region) with microtubules. In terms of tissue distribution, expressed in different cell lines (at protein level).

Its subcellular location is the cytoplasm. The protein localises to the cytoskeleton. It is found in the spindle pole. It localises to the microtubule organizing center. The protein resides in the centrosome. Its subcellular location is the midbody. Its function is as follows. Microtubule-associated protein (MAP) that plays a role in the regulation of cell division; promotes microtubule stability and participates in the organization of the spindle midzone and normal progress of cytokinesis. In Homo sapiens (Human), this protein is Microtubule-associated protein 10 (MAP10).